A 208-amino-acid polypeptide reads, in one-letter code: MGKKRSASSSRWLAEHFKDQFVQKAHKQKLRSRAYFKLDEIQQSDRLFRPGMTVVDLGAAPGGWSQYAVTQIGNQGRIIACDILDMNPIVGVDFLQGDFREVSVLNALLARVGDEMVDVVMSDMAPNFSGMPSVDIPRAMYLVELALDMCRQVLAPKGSFVVKVFQGEGFDDYLRDIRSMFTTVKVRKPEASRDRSREVYIVATGYKG.

S-adenosyl-L-methionine is bound by residues Gly62, Trp64, Asp82, Asp98, and Asp123. Lys163 acts as the Proton acceptor in catalysis.

It belongs to the class I-like SAM-binding methyltransferase superfamily. RNA methyltransferase RlmE family.

It localises to the cytoplasm. The catalysed reaction is uridine(2552) in 23S rRNA + S-adenosyl-L-methionine = 2'-O-methyluridine(2552) in 23S rRNA + S-adenosyl-L-homocysteine + H(+). Its function is as follows. Specifically methylates the uridine in position 2552 of 23S rRNA at the 2'-O position of the ribose in the fully assembled 50S ribosomal subunit. In Haemophilus ducreyi (strain 35000HP / ATCC 700724), this protein is Ribosomal RNA large subunit methyltransferase E.